We begin with the raw amino-acid sequence, 317 residues long: L-lactate dehydrogenase (317 aa).

Positions 16, 37, and 68 each coordinate NAD(+). Substrate is bound by residues glutamine 85, arginine 91, 123–126, and 151–154; these read NPCD and DSAR. 121–123 serves as a coordination point for NAD(+); the sequence is ASN. The active-site Proton acceptor is the histidine 178. Tyrosine 222 bears the Phosphotyrosine mark. Threonine 231 is a binding site for substrate.

The protein belongs to the LDH/MDH superfamily. LDH family. Homotetramer.

It localises to the cytoplasm. It carries out the reaction (S)-lactate + NAD(+) = pyruvate + NADH + H(+). It participates in fermentation; pyruvate fermentation to lactate; (S)-lactate from pyruvate: step 1/1. Catalyzes the conversion of lactate to pyruvate. The sequence is that of L-lactate dehydrogenase from Mesoplasma florum (strain ATCC 33453 / NBRC 100688 / NCTC 11704 / L1) (Acholeplasma florum).